Consider the following 174-residue polypeptide: Bifunctional protein PyrR (174 aa).

Residues 97–109 (VVIVDDVLYTGRT) carry the PRPP-binding motif.

This sequence belongs to the purine/pyrimidine phosphoribosyltransferase family. PyrR subfamily. Homodimer and homohexamer; in equilibrium.

The catalysed reaction is UMP + diphosphate = 5-phospho-alpha-D-ribose 1-diphosphate + uracil. Functionally, regulates transcriptional attenuation of the pyrimidine nucleotide (pyr) operon by binding in a uridine-dependent manner to specific sites on pyr mRNA. This disrupts an antiterminator hairpin in the RNA and favors formation of a downstream transcription terminator, leading to a reduced expression of downstream genes. Also displays a weak uracil phosphoribosyltransferase activity which is not physiologically significant. This is Bifunctional protein PyrR from Macrococcus caseolyticus (strain JCSC5402) (Macrococcoides caseolyticum).